The primary structure comprises 70 residues: Large ribosomal subunit protein eL38 (70 aa).

The protein belongs to the eukaryotic ribosomal protein eL38 family.

This is Large ribosomal subunit protein eL38 (RPL38) from Branchiostoma belcheri (Amphioxus).